Here is a 593-residue protein sequence, read N- to C-terminus: NADH-quinone oxidoreductase subunit C/D (593 aa).

The tract at residues 1-184 (MTTGSALYIP…DPFSLNLAKQ (184 aa)) is NADH dehydrogenase I subunit C. Residues 208 to 593 (DYMFLNLGPN…IDFVMADVDR (386 aa)) are NADH dehydrogenase I subunit D.

It in the N-terminal section; belongs to the complex I 30 kDa subunit family. This sequence in the C-terminal section; belongs to the complex I 49 kDa subunit family. As to quaternary structure, NDH-1 is composed of 13 different subunits. Subunits NuoB, CD, E, F, and G constitute the peripheral sector of the complex.

Its subcellular location is the cell inner membrane. It carries out the reaction a quinone + NADH + 5 H(+)(in) = a quinol + NAD(+) + 4 H(+)(out). In terms of biological role, NDH-1 shuttles electrons from NADH, via FMN and iron-sulfur (Fe-S) centers, to quinones in the respiratory chain. The immediate electron acceptor for the enzyme in this species is believed to be ubiquinone. Couples the redox reaction to proton translocation (for every two electrons transferred, four hydrogen ions are translocated across the cytoplasmic membrane), and thus conserves the redox energy in a proton gradient. The chain is NADH-quinone oxidoreductase subunit C/D from Pseudomonas fluorescens (strain ATCC BAA-477 / NRRL B-23932 / Pf-5).